The primary structure comprises 576 residues: Polyphenol oxidase 3 (576 aa).

Residues His-61, His-85, His-94, His-259, His-263, and His-296 each contribute to the Cu cation site. Residues 83–85 constitute a cross-link (2'-(S-cysteinyl)-histidine (Cys-His)); the sequence is CTH. His-263 lines the substrate pocket. The propeptide at 393 to 576 is removed in mature form; sequence FVTTQTENPA…ILDDIIHRVN (184 aa).

The protein belongs to the tyrosinase family. In terms of assembly, tetramer composed of two subunits of PPO3 (H subunits) and two subunits of the as yet uncharacterized product of ORF239342 (L subunits). It depends on Cu(2+) as a cofactor. Post-translationally, the C-ter is probably cleaved after Gly-392 since the mature active protein is smaller than the protein encoded by the gene.

It carries out the reaction 2 L-dopa + O2 = 2 L-dopaquinone + 2 H2O. It catalyses the reaction L-tyrosine + O2 = L-dopaquinone + H2O. In terms of biological role, copper-containing oxidase that catalyzes both the o-hydroxylation of monophenols and the subsequent oxidation of the resulting o-diphenols into reactive o-quinones, which evolve spontaneously to produce intermediates, which associate in dark brown pigments. Involved in the initial step of melanin synthesis. Melanins constitute a mechanism of defense and resistance to stress such as UV radiations, free radicals, gamma rays, dehydratation and extreme temperatures, and contribute to the fungal cell-wall resistance against hydrolytic enzymes in avoiding cellular lysis. Fungal pigments are also involved in the formation and stability of spores. The protein is Polyphenol oxidase 3 (PPO3) of Agaricus bisporus (White button mushroom).